The sequence spans 203 residues: Urease accessory protein UreG (203 aa).

14–21 provides a ligand contact to GTP; sequence GPVGSGKT.

This sequence belongs to the SIMIBI class G3E GTPase family. UreG subfamily. As to quaternary structure, homodimer. UreD, UreF and UreG form a complex that acts as a GTP-hydrolysis-dependent molecular chaperone, activating the urease apoprotein by helping to assemble the nickel containing metallocenter of UreC. The UreE protein probably delivers the nickel.

Its subcellular location is the cytoplasm. In terms of biological role, facilitates the functional incorporation of the urease nickel metallocenter. This process requires GTP hydrolysis, probably effectuated by UreG. The sequence is that of Urease accessory protein UreG from Rhizobium leguminosarum bv. viciae.